We begin with the raw amino-acid sequence, 319 residues long: Ribonuclease Z (319 aa).

Zn(2+)-binding residues include histidine 62, histidine 64, aspartate 66, histidine 67, histidine 145, aspartate 215, and histidine 273. The Proton acceptor role is filled by aspartate 66.

This sequence belongs to the RNase Z family. Homodimer. Zn(2+) is required as a cofactor.

It carries out the reaction Endonucleolytic cleavage of RNA, removing extra 3' nucleotides from tRNA precursor, generating 3' termini of tRNAs. A 3'-hydroxy group is left at the tRNA terminus and a 5'-phosphoryl group is left at the trailer molecule.. Its function is as follows. Zinc phosphodiesterase, which displays some tRNA 3'-processing endonuclease activity. Probably involved in tRNA maturation, by removing a 3'-trailer from precursor tRNA. This Borrelia garinii subsp. bavariensis (strain ATCC BAA-2496 / DSM 23469 / PBi) (Borreliella bavariensis) protein is Ribonuclease Z.